Here is a 132-residue protein sequence, read N- to C-terminus: Large ribosomal subunit protein uL14 (132 aa).

It belongs to the universal ribosomal protein uL14 family. As to quaternary structure, part of the 50S ribosomal subunit. Forms a cluster with proteins L3 and L24e, part of which may contact the 16S rRNA in 2 intersubunit bridges.

Its function is as follows. Binds to 23S rRNA. Forms part of two intersubunit bridges in the 70S ribosome. In Halorubrum lacusprofundi (strain ATCC 49239 / DSM 5036 / JCM 8891 / ACAM 34), this protein is Large ribosomal subunit protein uL14.